Reading from the N-terminus, the 414-residue chain is EARP and GARP complex-interacting protein 1 (414 aa).

Methionine 1 is subject to N-acetylmethionine. 4 WD repeats span residues 159–199 (TAHG…SQAV), 209–249 (KGQL…QIYC), 253–293 (AHGQ…EPVK), and 297–337 (EHSH…SEPF). Residues 337–362 (FGHLVDDDDISDQEDHRSEEKSKEPL) form a disordered region. Serine 347 is modified (phosphoserine). Positions 349-362 (QEDHRSEEKSKEPL) are enriched in basic and acidic residues. The stretch at 372–412 (EHEDSVYAVDWSSADPWLFASLSYDGRLVINRVPRALKYHI) is one WD 5 repeat.

It belongs to the WD repeat EIPR1 family. As to quaternary structure, interacts with two multisubunit tethering complexes: EARP composed of VPS50, VPS51, VPS52 and VPS53 subunits and GARP complex composed of VPS51, VPS52, VPS53 and VPS54 subunits. Interacts with SNAP29.

The protein resides in the golgi apparatus. It is found in the trans-Golgi network. In terms of biological role, acts as a component of endosomal retrieval machinery that is involved in protein transport from early endosomes to either recycling endosomes or the trans-Golgi network. Mediates the recruitment of Golgi-associated retrograde protein (GARP) complex to the trans-Golgi network and controls early endosome-to-Golgi transport of internalized protein. Promotes the recycling of internalized transferrin receptor (TFRC) to the plasma membrane through interaction with endosome-associated recycling protein (EARP) complex. Controls proper insulin distribution and secretion, and retention of cargo in mature dense core vesicles. Required for the stability of the endosome-associated retrograde protein (EARP) complex subunits and for proper localization and association of EARP with membranes. This Pongo abelii (Sumatran orangutan) protein is EARP and GARP complex-interacting protein 1.